A 102-amino-acid chain; its full sequence is Envelope protein US9 (102 aa).

The Intravirion segment spans residues Met-1 to Tyr-75. The Di-leucine internalization motif motif lies at Leu-14 to Leu-15. The tract at residues Glu-41–Glu-55 is acidic. Phosphoserine; by host CK2 is present on residues Ser-46 and Ser-48. Residues Ile-76–Ile-96 form a helical; Signal-anchor for type II membrane protein membrane-spanning segment. At Thr-97–Gly-102 the chain is on the virion surface side.

This sequence belongs to the alphaherpesvirinae envelope protein US9 family. Post-translationally, phosphorylated on serines within the acidic cluster, possibly by host CK2. Phosphorylation determines whether endocytosed viral US9 traffics to the trans-Golgi network or recycles to the cell membrane.

Its subcellular location is the virion membrane. It is found in the host Golgi apparatus membrane. It localises to the host Golgi apparatus. The protein localises to the host trans-Golgi network. The protein resides in the host cell membrane. Functionally, essential for the anterograde spread of the infection throughout the host nervous system. Together with the gE/gI heterodimer, US9 is involved in the sorting and transport of viral structural components toward axon tips. This is Envelope protein US9 from Varicella-zoster virus (strain Dumas) (HHV-3).